The sequence spans 198 residues: Nuclear transcription factor Y subunit A-4 (198 aa).

Residues 1 to 47 (MTSSVHELSDNNESHAKKERPDSQTRPQVPSGRSSESIDTNSVYSEP) are disordered. Residues 7 to 23 (ELSDNNESHAKKERPDS) are compositionally biased toward basic and acidic residues. Positions 24-44 (QTRPQVPSGRSSESIDTNSVY) are enriched in polar residues. The short motif at 101 to 124 (FVNAKQYHGILRRRQSRAKLEARN) is the Subunit association domain (SAD) element. The NFYA/HAP2-type DNA-binding region spans 131–156 (KPYMHESRHLHAIRRPRGCGGRFLNA). The tract at residues 136–198 (ESRHLHAIRR…MATSGPNGRS (63 aa)) is disordered. Over residues 156-166 (AKKENGDHKEE) the composition is skewed to basic and acidic residues.

The protein belongs to the NFYA/HAP2 subunit family. In terms of assembly, heterotrimeric transcription factor composed of three components, NF-YA, NF-YB and NF-YC. NF-YB and NF-YC must interact and dimerize for NF-YA association and DNA binding. As to expression, expressed in stems, caulines, and senescent flowers.

Its subcellular location is the nucleus. Stimulates the transcription of various genes by recognizing and binding to a CCAAT motif in promoters. In Arabidopsis thaliana (Mouse-ear cress), this protein is Nuclear transcription factor Y subunit A-4 (NFYA4).